The chain runs to 1325 residues: Bile salt export pump (1325 aa).

Topologically, residues 1 to 62 (MSDAVILRSV…FSSTTDIWLM (62 aa)) are cytoplasmic. In terms of domain architecture, ABC transmembrane type-1 1 spans 62–385 (MFVGSLCAFL…ASSCLEAFAT (324 aa)). Residues 63 to 83 (FVGSLCAFLHGLSHPGVLLIF) form a helical membrane-spanning segment. Topologically, residues 84 to 147 (GTMTDVFIAY…MIKFASYYAG (64 aa)) are extracellular. N-linked (GlcNAc...) asparagine glycans are attached at residues Asn109, Asn116, Asn122, and Asn125. Residues 148-168 (IALLVLITGYIQICFWVIAAA) form a helical membrane-spanning segment. At 169 to 240 (RQIQKMRKIS…FLLGFYQGWK (72 aa)) the chain is on the cytoplasmic side. The chain crosses the membrane as a helical span at residues 241–261 (LTLVIISVSPLIGIGAAIIGL). Topologically, residues 262–319 (SVSKFTDYELKAYAKAGSVADEVISSMRTVAAFGGEKKEVERYEKNLVFAQRWGIRKG) are extracellular. The helical transmembrane segment at 320-340 (IVMGFFTGFMWCLIFLCYALA) threads the bilayer. The Cytoplasmic portion of the chain corresponds to 341–353 (FWYGSKLVLEDGE). Residues 354–374 (YTAGTLVQIFLSILLGALNLG) traverse the membrane as a helical segment. N-linked (GlcNAc...) asparagine glycans are attached at residues Asn375, Asn424, and Asn440. At 375–759 (NASSCLEAFA…KFNAPEWPYM (385 aa)) the chain is on the extracellular side. In terms of domain architecture, ABC transporter 1 spans 420 to 656 (IEFHNVTFHY…KGVYFTLVTL (237 aa)). 455 to 462 (GSSGSGKS) is an ATP binding site. Asn591 is a glycosylation site (N-linked (GlcNAc...) asparagine). The 289-residue stretch at 759-1047 (MLFGAVGAAV…ASSYTPSYAK (289 aa)) folds into the ABC transmembrane type-1 2 domain. Residues 760 to 780 (LFGAVGAAVNGSVTPLYAFLF) traverse the membrane as a helical segment. Over 781–798 (SQILGTFSLPDKEEQRSQ) the chain is Cytoplasmic. Residues 799–819 (INGVCLLFVAVGCVSLCTQFL) traverse the membrane as a helical segment. Residues 820 to 894 (QGYAFAKSGE…NSFTNVTVAM (75 aa)) are Extracellular-facing. A glycan (N-linked (GlcNAc...) asparagine) is linked at Asn889. A helical transmembrane segment spans residues 895–915 (IIAFFFSWKLSLVIMCFFPFL). At 916–983 (ALSGALQTRM…PFKTAFRKAN (68 aa)) the chain is on the cytoplasmic side. Residues 984-1004 (VYGFCFGFSQCIVFVANSASY) form a helical membrane-spanning segment. Residues 1005 to 1014 (RYGGYLIPNE) lie on the Extracellular side of the membrane. A helical membrane pass occupies residues 1015 to 1035 (GLHFSYVFRVISSVVLSATAL). At 1036-1325 (GRASSYTPSY…KLVTTGAPIS (290 aa)) the chain is on the cytoplasmic side. The ABC transporter 2 domain maps to 1082–1320 (VDFVDCKFTY…KGAYYKLVTT (239 aa)). 1117-1124 (GSSGCGKS) contributes to the ATP binding site.

The protein belongs to the ABC transporter superfamily. ABCB family. Multidrug resistance exporter (TC 3.A.1.201) subfamily. Interacts with HAX1. Interacts with the adapter protein complex 2 (AP-2) throught AP2A2 or AP2A1; this interaction regulates cell membrane expression of ABCB11 through its internalization in a clathrin-dependent manner and its subsequent degradation. N-glycosylated. Post-translationally, ubiquitinated; short-chain ubiquitination regulates cell-Surface expression of ABCB11. As to expression, liver.

Its subcellular location is the apical cell membrane. The protein localises to the recycling endosome membrane. It is found in the endosome. The protein resides in the cell membrane. It carries out the reaction cholate(in) + ATP + H2O = cholate(out) + ADP + phosphate + H(+). It catalyses the reaction taurocholate(in) + ATP + H2O = taurocholate(out) + ADP + phosphate + H(+). The catalysed reaction is glycocholate(in) + ATP + H2O = glycocholate(out) + ADP + phosphate + H(+). The enzyme catalyses glycochenodeoxycholate(in) + ATP + H2O = glycochenodeoxycholate(out) + ADP + phosphate + H(+). It carries out the reaction taurochenodeoxycholate(in) + ATP + H2O = taurochenodeoxycholate(out) + ADP + phosphate + H(+). It catalyses the reaction glycoursodeoxycholate(in) + ATP + H2O = glycoursodeoxycholate(out) + ADP + phosphate + H(+). The catalysed reaction is tauroursodeoxycholate(in) + ATP + H2O = tauroursodeoxycholate(out) + ADP + phosphate + H(+). The enzyme catalyses taurodeoxycholate(in) + ATP + H2O = taurodeoxycholate(out) + ADP + phosphate + H(+). It carries out the reaction taurolithocholate 3-sulfate(in) + ATP + H2O = taurolithocholate 3-sulfate(out) + ADP + phosphate + H(+). It catalyses the reaction pravastatin(in) + ATP + H2O = pravastatin(out) + ADP + phosphate + H(+). Its activity is regulated as follows. The uptake of taurocholate is inhibited by taurolithocholate sulfate with an IC(50) of 9 uM. Pravastatin competitively inhibits the transport of taurocholic acid. Cyclosporin A, glibenclamide, rifampicin and troglitazonestrongly competitively inhibit the transport activity of taurocholate. The canalicular transport activity of taurocholate is strongly dependent on canalicular membrane cholesterol content. The uptake of taurocholate is increased by short- and medium-chain fatty acids. Cholesterol increases transport capacity of taurocholate without affecting the affinity for the substrate. In terms of biological role, catalyzes the transport of the major hydrophobic bile salts, such as taurine and glycine-conjugated cholic acid across the canalicular membrane of hepatocytes in an ATP-dependent manner, therefore participates in hepatic bile acid homeostasis and consequently to lipid homeostasis through regulation of biliary lipid secretion in a bile salts dependent manner. Transports taurine-conjugated bile salts more rapidly than glycine-conjugated bile salts. Also transports non-bile acid compounds, such as pravastatin and fexofenadine in an ATP-dependent manner and may be involved in their biliary excretion. This chain is Bile salt export pump, found in Canis lupus familiaris (Dog).